The primary structure comprises 354 residues: MSSLRAHQKKNPTPTQCQNQTTLDSICKDIQTGKITRIVALVGAGLSTSSGLADFRTPDTGLYAKLEPLQLPYPEALFHISYFKHTPEPFYAIARGRHPWNTKPGVGHAFLALLEKKGVLGFVFTQNIDGLELDAGVSRERVMNLHGDWSDQHCIKCRSSYPADRMRKAILTGEVPFCVQANCEGIVKPAIVMFGESLPEGFDSREEEMLSTADLLLVIGTSLKVAPCSEIPRRLPSHVPRVLVNRELVGNIGTRESDVCLLGDCDAWLREVARHLGWDEELESVWKDTLVRKEKSSRDKGWDDKAEQSPTLEECIVRAAEQMKVRMGVSEGHRRMLEGHLGEKMAEIMAKRGQ.

Residues 16-279 (QCQNQTTLDS…REVARHLGWD (264 aa)) enclose the Deacetylase sirtuin-type domain. Residues 43–63 (GAGL…TGLY) and 126–129 (QNID) each bind NAD(+). The active-site Proton acceptor is His-146. Zn(2+) contacts are provided by Cys-154, Cys-157, Cys-178, and Cys-183. Residues 220 to 222 (GTS), 245 to 247 (NRE), and Cys-265 each bind NAD(+).

It belongs to the sirtuin family. Class I subfamily. Zn(2+) is required as a cofactor.

It is found in the nucleus. It carries out the reaction N(6)-acetyl-L-lysyl-[protein] + NAD(+) + H2O = 2''-O-acetyl-ADP-D-ribose + nicotinamide + L-lysyl-[protein]. Its function is as follows. NAD-dependent histone deacetylase, which could function in telomeric silencing, cell cycle progression and chromosome stability. The polypeptide is NAD-dependent protein deacetylase hst2-2 (Emericella nidulans (strain FGSC A4 / ATCC 38163 / CBS 112.46 / NRRL 194 / M139) (Aspergillus nidulans)).